Consider the following 129-residue polypeptide: Insulin-like growth factor 2 (129 aa).

Positions 1-24 are cleaved as a signal peptide; sequence MGVPMGKSLLAPLTFLALASCCFA. The segment at 25–52 is b; that stretch reads AYRPSETLCGGELVDTLQFVCGDRGFYF. 3 cysteine pairs are disulfide-bonded: C33-C72, C45-C85, and C71-C76. Positions 53-65 are c; the sequence is SRPASRVSRRSSR. The interval 66-86 is a; the sequence is GIVEECCFRSCDLALLETYCA. Positions 87-92 are d; the sequence is TPAKSE. A propeptide spans 93–129 (e peptide); the sequence is RDVSTPPTVLPDNFPRYPVGKFFQYDTWKQSAQRLRR.

This sequence belongs to the insulin family. Interacts with MYORG; this interaction is required for IGF2 secretion. Interacts with integrins ITGAV:ITGB3 and ITGA6:ITGB4; integrin-binding is required for IGF2 signaling. In terms of processing, proteolytically processed by PCSK4, proIGF2 is cleaved at Arg-129 and Arg-92 to generate big-IGF2 and mature IGF2.

It localises to the secreted. Functionally, the insulin-like growth factors possess growth-promoting activity. Major fetal growth hormone in mammals. Plays a key role in regulating fetoplacental development. IGF2 is influenced by placental lactogen. Also involved in tissue differentiation. In adults, involved in glucose metabolism in adipose tissue, skeletal muscle and liver. Acts as a ligand for integrin which is required for IGF2 signaling. Positively regulates myogenic transcription factor MYOD1 function by facilitating the recruitment of transcriptional coactivators, thereby controlling muscle terminal differentiation. Inhibits myoblast differentiation and modulates metabolism via increasing the mitochondrial respiration rate. Its function is as follows. Preptin undergoes glucose-mediated co-secretion with insulin, and acts as a physiological amplifier of glucose-mediated insulin secretion. Exhibits osteogenic properties by increasing osteoblast mitogenic activity through phosphoactivation of MAPK1 and MAPK3. The sequence is that of Insulin-like growth factor 2 from Neovison vison (American mink).